The sequence spans 597 residues: Indole-3-acetic acid-amido synthetase GH3.4 (597 aa).

It belongs to the IAA-amido conjugating enzyme family.

Functionally, catalyzes the synthesis of indole-3-acetic acid (IAA)-amino acid conjugates, providing a mechanism for the plant to cope with the presence of excess auxin. Strongly reactive with Glu, Gln, Trp, Asp, Ala, Leu, Phe, Gly, Tyr, Met, Ile and Val. Little or no product formation with His, Ser, Thr, Arg, Lys, or Cys. Also active on pyruvic and butyric acid analogs of IAA, PAA and the synthetic auxin naphthaleneacetic acid (NAA). The two chlorinated synthetic auxin herbicides 2,4-D and 3,6-dichloro-o-anisic acid (dicamba) cannot be used as substrates. The protein is Indole-3-acetic acid-amido synthetase GH3.4 (GH3.4) of Arabidopsis thaliana (Mouse-ear cress).